The sequence spans 493 residues: Ribose import ATP-binding protein RbsA (493 aa).

ABC transporter domains follow at residues 3-239 and 246-493; these read IEMK…VGRE and KRTP…TGGR. An ATP-binding site is contributed by 35–42; the sequence is GENGAGKS.

This sequence belongs to the ABC transporter superfamily. Ribose importer (TC 3.A.1.2.1) family. The complex is composed of an ATP-binding protein (RbsA), two transmembrane proteins (RbsC) and a solute-binding protein (RbsB).

It is found in the cell membrane. The enzyme catalyses D-ribose(out) + ATP + H2O = D-ribose(in) + ADP + phosphate + H(+). Functionally, part of the ABC transporter complex RbsABC involved in ribose import. Responsible for energy coupling to the transport system. This Bacillus subtilis (strain 168) protein is Ribose import ATP-binding protein RbsA.